We begin with the raw amino-acid sequence, 368 residues long: Glutamate 5-kinase (368 aa).

Position 12 (Lys12) interacts with ATP. Substrate-binding residues include Ser52, Asp139, and Asn151. ATP is bound by residues 171–172 and 213–219; these read SD and TGGMKTK. A PUA domain is found at 277-354; it reads KGALIIDDGA…KEIEKLLGYI (78 aa).

It belongs to the glutamate 5-kinase family.

It localises to the cytoplasm. It catalyses the reaction L-glutamate + ATP = L-glutamyl 5-phosphate + ADP. The protein operates within amino-acid biosynthesis; L-proline biosynthesis; L-glutamate 5-semialdehyde from L-glutamate: step 1/2. Its function is as follows. Catalyzes the transfer of a phosphate group to glutamate to form L-glutamate 5-phosphate. In Pelagibacter ubique (strain HTCC1062), this protein is Glutamate 5-kinase.